We begin with the raw amino-acid sequence, 393 residues long: NAD(P)H-quinone oxidoreductase subunit H, chloroplastic (393 aa).

The protein belongs to the complex I 49 kDa subunit family. As to quaternary structure, NDH is composed of at least 16 different subunits, 5 of which are encoded in the nucleus.

Its subcellular location is the plastid. It localises to the chloroplast thylakoid membrane. The enzyme catalyses a plastoquinone + NADH + (n+1) H(+)(in) = a plastoquinol + NAD(+) + n H(+)(out). The catalysed reaction is a plastoquinone + NADPH + (n+1) H(+)(in) = a plastoquinol + NADP(+) + n H(+)(out). In terms of biological role, NDH shuttles electrons from NAD(P)H:plastoquinone, via FMN and iron-sulfur (Fe-S) centers, to quinones in the photosynthetic chain and possibly in a chloroplast respiratory chain. The immediate electron acceptor for the enzyme in this species is believed to be plastoquinone. Couples the redox reaction to proton translocation, and thus conserves the redox energy in a proton gradient. The chain is NAD(P)H-quinone oxidoreductase subunit H, chloroplastic from Angiopteris evecta (Mule's foot fern).